Here is a 156-residue protein sequence, read N- to C-terminus: MSINATLFVQAIVFLILVLFTMKFVWPPIAKALDERAQKIAEGLAAADRAKSELVAVNQRVETELAQTRNETASRLADAERRAQAIIEEAKARATEEGNKIVAAARAEAEQQTIQAREALREQVAALAVKGAEQILRKEVNAGVHADLLNRLKTEL.

Residues 7-27 traverse the membrane as a helical segment; the sequence is LFVQAIVFLILVLFTMKFVWP.

This sequence belongs to the ATPase B chain family. In terms of assembly, F-type ATPases have 2 components, F(1) - the catalytic core - and F(0) - the membrane proton channel. F(1) has five subunits: alpha(3), beta(3), gamma(1), delta(1), epsilon(1). F(0) has three main subunits: a(1), b(2) and c(10-14). The alpha and beta chains form an alternating ring which encloses part of the gamma chain. F(1) is attached to F(0) by a central stalk formed by the gamma and epsilon chains, while a peripheral stalk is formed by the delta and b chains.

The protein localises to the cell inner membrane. In terms of biological role, f(1)F(0) ATP synthase produces ATP from ADP in the presence of a proton or sodium gradient. F-type ATPases consist of two structural domains, F(1) containing the extramembraneous catalytic core and F(0) containing the membrane proton channel, linked together by a central stalk and a peripheral stalk. During catalysis, ATP synthesis in the catalytic domain of F(1) is coupled via a rotary mechanism of the central stalk subunits to proton translocation. Component of the F(0) channel, it forms part of the peripheral stalk, linking F(1) to F(0). This chain is ATP synthase subunit b, found in Paracidovorax citrulli (strain AAC00-1) (Acidovorax citrulli).